Here is a 359-residue protein sequence, read N- to C-terminus: Phospho-N-acetylmuramoyl-pentapeptide-transferase (359 aa).

Transmembrane regions (helical) follow at residues 3-23 (QILFAAGIALAVSILLTPVLI), 53-73 (GGVAILAGLWAGYWGSHLIGI), 84-104 (GLLVLGLTTALGGVGFLDDFI), 117-137 (TAKLVGQLIAAVAFGILALQF), 156-176 (IATVTMGSVVFVAFCYLLVSA), 187-207 (LDGLAAGSMSLVLGAYVIITF), 231-251 (LALICAAGAGACIGFLWWNAA), 255-275 (IFMGDTGSLALGGMLAGLSIT), 283-303 (VVIGALFVAEAASVVIQVAVF), and 330-350 (VIIRFWLLAAIASAIGLALFY).

This sequence belongs to the glycosyltransferase 4 family. MraY subfamily. It depends on Mg(2+) as a cofactor.

It is found in the cell membrane. The catalysed reaction is UDP-N-acetyl-alpha-D-muramoyl-L-alanyl-gamma-D-glutamyl-meso-2,6-diaminopimeloyl-D-alanyl-D-alanine + di-trans,octa-cis-undecaprenyl phosphate = di-trans,octa-cis-undecaprenyl diphospho-N-acetyl-alpha-D-muramoyl-L-alanyl-D-glutamyl-meso-2,6-diaminopimeloyl-D-alanyl-D-alanine + UMP. It functions in the pathway cell wall biogenesis; peptidoglycan biosynthesis. In terms of biological role, catalyzes the initial step of the lipid cycle reactions in the biosynthesis of the cell wall peptidoglycan: transfers peptidoglycan precursor phospho-MurNAc-pentapeptide from UDP-MurNAc-pentapeptide onto the lipid carrier undecaprenyl phosphate, yielding undecaprenyl-pyrophosphoryl-MurNAc-pentapeptide, known as lipid I. The sequence is that of Phospho-N-acetylmuramoyl-pentapeptide-transferase from Rhodococcus jostii (strain RHA1).